Here is a 170-residue protein sequence, read N- to C-terminus: Putative pre-16S rRNA nuclease (170 aa).

The segment covering 1–18 (MGTDDRLPDRPGADDPGR) has biased composition (basic and acidic residues). A disordered region spans residues 1–22 (MGTDDRLPDRPGADDPGRGRRI).

It belongs to the YqgF nuclease family.

It localises to the cytoplasm. Its function is as follows. Could be a nuclease involved in processing of the 5'-end of pre-16S rRNA. This Mycolicibacterium smegmatis (strain ATCC 700084 / mc(2)155) (Mycobacterium smegmatis) protein is Putative pre-16S rRNA nuclease.